The chain runs to 552 residues: Serine/threonine-protein kinase RIO2 (552 aa).

The region spanning 97-272 is the Protein kinase domain; it reads VGNQMGVGKE…DRDVKCIKDF (176 aa). Lys-123 is an ATP binding site. Asp-228 acts as the Proton acceptor in catalysis. Residues Ser-332, Ser-335, Ser-337, Ser-350, Ser-362, Ser-380, Ser-382, Ser-385, and Ser-390 each carry the phosphoserine modification. The Nuclear export signal signature appears at 399 to 408; that stretch reads ALEEIKGQVV. Phosphoserine occurs at positions 412, 417, and 442. Phosphotyrosine is present on Tyr-445. Ser-548 bears the Phosphoserine mark.

Belongs to the protein kinase superfamily. RIO-type Ser/Thr kinase family. Associated with late 40S pre-ribosomal particles. Interacts with PLK1 (via its N-terminus). It depends on Mg(2+) as a cofactor. In terms of processing, autophosphorylated (in vitro). Phosphorylation at Ser-335, Ser-380, Ser-548 by PLK1 affects the timing of the metaphase-anaphase transition.

The protein localises to the cytoplasm. It catalyses the reaction L-seryl-[protein] + ATP = O-phospho-L-seryl-[protein] + ADP + H(+). It carries out the reaction L-threonyl-[protein] + ATP = O-phospho-L-threonyl-[protein] + ADP + H(+). Its function is as follows. Serine/threonine-protein kinase involved in the final steps of cytoplasmic maturation of the 40S ribosomal subunit. Involved in export of the 40S pre-ribosome particles (pre-40S) from the nucleus to the cytoplasm. Its kinase activity is required for the release of NOB1, PNO1 and LTV1 from the late pre-40S and the processing of 18S-E pre-rRNA to the mature 18S rRNA. Regulates the timing of the metaphase-anaphase transition during mitotic progression, and its phosphorylation, most likely by PLK1, regulates this function. In Homo sapiens (Human), this protein is Serine/threonine-protein kinase RIO2.